A 97-amino-acid chain; its full sequence is Conotoxin Cal6.1e (97 aa).

The signal sequence occupies residues 1–22 (MKLTTVLIVAVLVLAACQFTVT). Positions 23–49 (DNSGDDTENPSLRSAGENQNPDSTKTI) are disordered. A propeptide spanning residues 23-60 (DNSGDDTENPSLRSAGENQNPDSTKTITARATRARTNM) is cleaved from the precursor. Residues 31–45 (NPSLRSAGENQNPDS) show a composition bias toward polar residues. 3 disulfides stabilise this stretch: C71–C87, C78–C91, and C86–C96.

This sequence belongs to the conotoxin O1 superfamily. As to expression, expressed by the venom duct.

It localises to the secreted. Functionally, probable neurotoxin with unknown target. Possibly targets ion channels. This is Conotoxin Cal6.1e from Californiconus californicus (California cone).